We begin with the raw amino-acid sequence, 649 residues long: uncharacterized protein (649 aa).

It localises to the nucleus. The protein resides in the cytoplasm. This is an uncharacterized protein from Schizosaccharomyces pombe (strain 972 / ATCC 24843) (Fission yeast).